Consider the following 464-residue polypeptide: Transcription factor EAT1 (464 aa).

Residues 261 to 274 (GKGKANFATERERR) are basic motif; degenerate. Residues 261–310 (GKGKANFATERERREQLNVKFRTLRMLFPNPTKNDRASIVGDAIEYIDEL) enclose the bHLH domain. Positions 275–310 (EQLNVKFRTLRMLFPNPTKNDRASIVGDAIEYIDEL) are helix-loop-helix motif. Residues 338–357 (QEAAADGESSSMRPVRDDQD) form a disordered region.

Belongs to the bHLH protein family. As to quaternary structure, interacts with TDR.

The protein localises to the nucleus. Transcription factor involved in the regulation of tapetum programmed cell death (PCD) and degradation during male reproductive development. Interacts with TDR and promote tapetal PCD by regulating the expression of RTS, and the two lipid-transfer proteins C4 and C6, which function in microspore development. Acts downstream from and interacts with TDR in the regulation of tapetal PCD. Regulates directly the aspartic protease AP25 and AP37 during tapetal PCD. May not target the cysteine protease CP1. In Oryza sativa subsp. japonica (Rice), this protein is Transcription factor EAT1.